Consider the following 287-residue polypeptide: POU domain class 2-associating factor 2 (287 aa).

Residues 10–32 (KRVYQGVRVKHTVKDLLAEKRSR) form the OCA domain. Disordered regions lie at residues 24–51 (DLLA…PPFI), 161–199 (TVPD…TQHR), and 247–279 (PKVG…MAWG). Polar residues-rich tracts occupy residues 33-49 (QTSN…SQPP) and 180-199 (LPPS…TQHR).

It belongs to the POU2AF family. As to quaternary structure, interacts with POU2F3 (via the POU domain) in a DNA-dependent manner; this interaction recruits POU2AF2 to chromatin and increases POU2F3 transactivation activity. As to expression, expressed in tuft cells of the small intestine, trachea, thymus, and colon.

It localises to the cytoplasm. The protein resides in the cytosol. It is found in the nucleus. Transcriptional coactivator of POU2F3. This complex drives the development of tuft cells, a rare chemosensory cells that coordinate immune and neural functions within mucosal epithelial tissues. The sequence is that of POU domain class 2-associating factor 2 from Mus musculus (Mouse).